The sequence spans 7124 residues: Replicase polyprotein 1ab (7124 aa).

A disordered region spans residues S25 to Q45. The 143-residue stretch at L54–G196 folds into the CoV Nsp1 globular domain. The BetaCoV Nsp1 C-terminal domain maps to F217 to G247. The region spanning I251–M511 is the CoV Nsp2 N-terminal domain. Residues C390, C395, C411, and C414 each coordinate Zn(2+). A C4 region spans residues C390 to C414. Residues C518–V706 enclose the CoV Nsp2 middle domain. Positions S726 to A832 constitute a CoV Nsp2 C-terminal domain. Positions K834–D946 constitute a Ubiquitin-like 1 domain. One can recognise a Peptidase C16 1 domain in the interval A1031–T1268. C1068 (for PL1-PRO activity) is an active-site residue. Residues C1145, C1148, C1171, and C1173 each coordinate Zn(2+). The C4-type 1 zinc-finger motif lies at C1145 to C1173. Catalysis depends on for PL1-PRO activity residues H1219 and D1230. A Macro domain is found at P1269 to I1429. Residues D1484–N1556 enclose the DPUP domain. Residues A1555–Q1610 enclose the Ubiquitin-like 2 domain. A Peptidase C16 2 domain is found at A1625–Q1884. C1663 functions as the For PL2-PRO activity in the catalytic mechanism. Residues C1741, C1743, C1775, and C1777 each contribute to the Zn(2+) site. Residues C1741–C1777 form a C4-type 2 zinc finger. Residues H1820 and D1834 each act as for PL2-PRO activity in the active site. The region spanning I1898 to C1999 is the Nucleic acid-binding domain. One can recognise a G2M domain in the interval Q2053–E2202. 2 helical membrane-spanning segments follow: residues F2232–L2252 and I2260–I2280. An HD1 region spans residues F2232–V2408. Positions G2268–D2329 constitute a 3Ecto domain. Disulfide bonds link C2284/C2308 and C2299/C2305. Transmembrane regions (helical) follow at residues L2346–M2366 and F2388–V2408. The interval C2416 to D2506 is Y1. Residues C2416–G2783 enclose the CoV Nsp3 Y domain. Zn(2+)-binding residues include H2420, C2425, C2430, C2433, C2466, H2469, C2473, and C2476. The interval H2420 to C2433 is ZF1. Residues C2466–C2476 form a ZF2 region. Residues S2507 to A2599 form a Y2 region. Residues S2507–G2783 form a coV-Y region. The interval N2600–G2682 is Y3. The tract at residues V2683 to G2783 is Y4. 7 consecutive transmembrane segments (helical) span residues V2789–P2809, A2869–P2889, A3042–L3062, A3064–I3084, V3096–V3116, L3123–M3143, and L3148–V3168. Positions V2789–V3168 are HD2. The Nsp4C domain maps to L3182–Q3279. The Peptidase C30 domain occupies S3280–Q3582. Residues H3320 and C3424 each act as for 3CL-PRO activity in the active site. The tract at residues L3525–S3808 is HD3. Transmembrane regions (helical) follow at residues G3591–V3611, T3621–V3641, Y3647–V3667, T3690–M3710, V3717–G3737, V3744–A3764, and L3788–S3808. Positions S3870 to Q3958 constitute a RdRp Nsp7 cofactor domain. In terms of domain architecture, RdRp Nsp8 cofactor spans A3959–Q4155. A Nsp9 ssRNA-binding domain is found at N4156–Q4265. An ExoN/MTase coactivator domain is found at A4266–S4403. C4339, C4342, H4348, C4355, C4381, C4384, C4392, and C4394 together coordinate Zn(2+). 2 zinc fingers span residues C4339–C4355 and C4381–C4394. Positions F4408–Y4663 constitute a NiRAN domain. Mn(2+)-binding residues include N4611 and D4620. Residues R4664 to Y4762 enclose the Nsp12 Interface domain. H4693, C4699, C4704, C4708, and C4885 together coordinate Zn(2+). The 568-residue stretch at R4763 to Q5330 folds into the Nsp12 RNA-dependent RNA polymerase domain. The rdRp Fingers N-ter stretch occupies residues S4765–A4979. Residues T4980–P5018 form a rdRp Palm N-ter region. The region spanning P5010–G5172 is the RdRp catalytic domain. Positions K5019–G5077 are rdRp Fingers C-ter. Zn(2+) is bound by residues H5040, C5043, and C5044. The segment at T5078–Q5213 is rdRp Palm C-ter. Catalysis depends on residues S5157, D5158, and D5159. The tract at residues H5214–Q5330 is rdRp Thumb. The region spanning S5331–K5443 is the CV ZBD domain. Zn(2+) contacts are provided by C5335, C5338, C5346, C5349, C5356, C5359, H5363, H5369, C5380, C5385, C5402, and H5405. One can recognise a (+)RNA virus helicase ATP-binding domain in the interval S5586–L5767. G5611–S5618 lines the ATP pocket. Residues G5768 to K5937 enclose the (+)RNA virus helicase C-terminal domain. The 216-residue stretch at L6001–C6216 folds into the ExoN domain. Active-site residues include D6019, E6021, and E6120. Zn(2+) contacts are provided by C6136, C6139, C6155, H6158, H6186, C6190, and H6193. Residues H6197 and D6202 contribute to the active site. Position 6208 (C6208) interacts with Zn(2+). One can recognise an N7-MTase domain in the interval Y6225–Q6451. D6260–G6266 serves as a coordination point for S-adenosyl-L-methionine. Positions C6338–T6352 are gpppA-binding. C6376, C6397, C6408, and H6411 together coordinate Zn(2+). Residues S6452–R6512 enclose the Nsp15 N-terminal oligomerization domain. Positions S6513–V6633 constitute an AV-Nsp11N/CoV-Nsp15M domain. The NendoU domain occupies A6683–P6822. Residues H6713, H6728, K6768, K6871, D6955, K6995, and E7028 contribute to the active site. The Nidovirus-type SAM-dependent 2'-O-MTase domain maps to A6827–V7121.

The protein belongs to the coronaviruses polyprotein 1ab family. In terms of assembly, interacts with host PHB and PHB2. As to quaternary structure, interacts with papain-like protease nsp3 and non-structural protein 6. Monomer. Homodimer. Only the homodimer shows catalytic activity. In terms of assembly, interacts with nsp8 and nsp12 to form the replication-transcription complex (RTC): nsp12, nsp7, two subunits of nsp8, and up to two subunits of nsp13. As to quaternary structure, interacts with nsp7, nsp13 and nsp12 to form the replication-transcription complex (RTC): nsp12, nsp7, two subunits of nsp8, and up to two subunits of nsp13. Interacts with nsp12. In terms of assembly, interacts with proofreading exoribonuclease nsp14 and 2'-O-methyltransferase nsp16; these interactions enhance nsp14 and nsp16 enzymatic activities. As to quaternary structure, interacts with nsp7 and nsp8 to form the replication-transcription complex (RTC): nsp12, nsp7, two subunits of nsp8, and up to two subunits of nsp13. Interacts with nsp9. Interacts with nsp8 to form the replication-transcription complex (RTC): nsp12, nsp7, two subunits of nsp8, and up to two subunits of nsp13. The cofactor is Mn(2+). Requires Mg(2+) as cofactor. Specific enzymatic cleavages in vivo by its own proteases yield mature proteins. 3CL-PRO and PL-PRO proteinases are autocatalytically processed.

It is found in the host membrane. The protein localises to the host cytoplasm. The protein resides in the host perinuclear region. It localises to the host endoplasmic reticulum-Golgi intermediate compartment. The catalysed reaction is RNA(n) + a ribonucleoside 5'-triphosphate = RNA(n+1) + diphosphate. It carries out the reaction ATP + H2O = ADP + phosphate + H(+). The enzyme catalyses Thiol-dependent hydrolysis of ester, thioester, amide, peptide and isopeptide bonds formed by the C-terminal Gly of ubiquitin (a 76-residue protein attached to proteins as an intracellular targeting signal).. It catalyses the reaction a 5'-end (N(7)-methyl 5'-triphosphoguanosine)-ribonucleoside in mRNA + S-adenosyl-L-methionine = a 5'-end (N(7)-methyl 5'-triphosphoguanosine)-(2'-O-methyl-ribonucleoside) in mRNA + S-adenosyl-L-homocysteine + H(+). The catalysed reaction is uridylyl-uridylyl-ribonucleotide-RNA = a 3'-end uridylyl-2',3'-cyclophospho-uridine-RNA + a 5'-end dephospho-ribonucleoside-RNA. It carries out the reaction a 5'-end diphospho-ribonucleoside in mRNA + GTP + H(+) = a 5'-end (5'-triphosphoguanosine)-ribonucleoside in mRNA + diphosphate. The enzyme catalyses a 5'-end (5'-triphosphoguanosine)-ribonucleoside in mRNA + S-adenosyl-L-methionine = a 5'-end (N(7)-methyl 5'-triphosphoguanosine)-ribonucleoside in mRNA + S-adenosyl-L-homocysteine. In terms of biological role, the replicase polyprotein of coronaviruses is a multifunctional protein: it contains the activities necessary for the transcription of negative stranded RNA, leader RNA, subgenomic mRNAs and progeny virion RNA as well as proteinases responsible for the cleavage of the polyprotein into functional products. Its function is as follows. Inhibits host translation by interacting with the 40S ribosomal subunit. The nsp1-40S ribosome complex further induces an endonucleolytic cleavage near the 5'UTR of host mRNAs, targeting them for degradation. Viral mRNAs are not susceptible to nsp1-mediated endonucleolytic RNA cleavage thanks to the presence of a 5'-end leader sequence and are therefore protected from degradation. By suppressing host gene expression, nsp1 facilitates efficient viral gene expression in infected cells and evasion from host immune response. Functionally, may play a role in the modulation of host cell survival signaling pathway by interacting with host PHB and PHB2. Indeed, these two proteins play a role in maintaining the functional integrity of the mitochondria and protecting cells from various stresses. Responsible for the cleavages located at the N-terminus of the replicase polyprotein. In addition, PL-PRO possesses a deubiquitinating/deISGylating activity and processes both 'Lys-48'- and 'Lys-63'-linked polyubiquitin chains from cellular substrates. Participates together with nsp4 in the assembly of virally-induced cytoplasmic double-membrane vesicles necessary for viral replication. Antagonizes innate immune induction of type I interferon by blocking the phosphorylation, dimerization and subsequent nuclear translocation of host IRF3. Also prevents host NF-kappa-B signaling. In terms of biological role, participates in the assembly of virally-induced cytoplasmic double-membrane vesicles necessary for viral replication. Its function is as follows. Cleaves the C-terminus of replicase polyprotein at 11 sites. Recognizes substrates containing the core sequence [ILMVF]-Q-|-[SGACN]. Also able to bind an ADP-ribose-1''-phosphate (ADRP). Functionally, plays a role in the initial induction of autophagosomes from host endoplasmic reticulum. Later, limits the expansion of these phagosomes that are no longer able to deliver viral components to lysosomes. Forms a hexadecamer with nsp8 (8 subunits of each) that may participate in viral replication by acting as a primase. Alternatively, may synthesize substantially longer products than oligonucleotide primers. In terms of biological role, forms a hexadecamer with nsp7 (8 subunits of each) that may participate in viral replication by acting as a primase. Alternatively, may synthesize substantially longer products than oligonucleotide primers. Its function is as follows. Forms a primer, NSP9-pU, which is utilized by the polymerase for the initiation of RNA chains. Interacts with ribosome signal recognition particle RNA (SRP). Together with NSP8, suppress protein integration into the cell membrane, thereby disrupting host immune defenses. Functionally, plays a pivotal role in viral transcription by stimulating both nsp14 3'-5' exoribonuclease and nsp16 2'-O-methyltransferase activities. Therefore plays an essential role in viral mRNAs cap methylation. RNA-directed RNA polymerase that catalyzes the transcription of viral genomic and subgenomic RNAs. Acts in complex with nsp7 and nsp8 to transcribe both the minus and positive strands of genomic RNA. The kinase-like NiRAN domain of NSP12 attaches one or more nucleotides to the amino terminus of NSP9, forming a covalent RNA-protein intermediate that serves as transcription/replication primer. Subgenomic RNAs (sgRNAs) are formed by discontinuous transcription: The polymerase has the ability to pause at transcription-regulating sequences (TRS) and jump to the leader TRS, resulting in a major deletion. This creates a series of subgenomic RNAs that are replicated, transcribed and translated. In addition, Nsp12 is a subunit of the viral RNA capping enzyme that catalyzes the RNA guanylyltransferase reaction for genomic and sub-genomic RNAs. Subsequently, the NiRAN domain transfers RNA to GDP, and forms the core cap structure GpppA-RNA. In terms of biological role, multi-functional protein with a zinc-binding domain in N-terminus displaying RNA and DNA duplex-unwinding activities with 5' to 3' polarity. Activity of helicase is dependent on magnesium. Its function is as follows. Plays a role in viral RNA synthesis through two distinct activities. The N7-guanine methyltransferase activity plays a role in the formation of the cap structure GpppA-RNA. The proofreading exoribonuclease reduces the sensitivity of the virus to RNA mutagens during replication. This activity acts on both ssRNA and dsRNA in a 3'-5' direction. Functionally, plays a role in viral transcription/replication and prevents the simultaneous activation of host cell dsRNA sensors, such as MDA5/IFIH1, OAS, and PKR. Acts by degrading the 5'-polyuridines generated during replication of the poly(A) region of viral genomic and subgenomic RNAs. Catalyzes a two-step reaction in which a 2'3'-cyclic phosphate (2'3'-cP) is first generated by 2'-O transesterification, which is then hydrolyzed to a 3'-phosphate (3'-P). If not degraded, poly(U) RNA would hybridize with poly(A) RNA tails and activate host dsRNA sensors. Methyltransferase that mediates mRNA cap 2'-O-ribose methylation to the 5'-cap structure of viral mRNAs. N7-methyl guanosine cap is a prerequisite for binding of nsp16. Therefore plays an essential role in viral mRNAs cap methylation which is essential to evade immune system. The polypeptide is Replicase polyprotein 1ab (rep) (Murine coronavirus (strain 2) (MHV-2)).